Reading from the N-terminus, the 266-residue chain is Undecaprenyl-diphosphatase (266 aa).

A run of 7 helical transmembrane segments spans residues 41–61 (YAYS…LIYF), 82–102 (LVYI…LYYV), 106–126 (WLVV…AVVL), 159–179 (AVSV…LLLL), 191–211 (FVLV…SEGG), 213–233 (VATA…IITI), and 246–266 (VLVN…RIIF).

The protein belongs to the UppP family.

It localises to the cell membrane. It carries out the reaction di-trans,octa-cis-undecaprenyl diphosphate + H2O = di-trans,octa-cis-undecaprenyl phosphate + phosphate + H(+). In terms of biological role, catalyzes the dephosphorylation of undecaprenyl diphosphate (UPP). This chain is Undecaprenyl-diphosphatase, found in Pyrobaculum aerophilum (strain ATCC 51768 / DSM 7523 / JCM 9630 / CIP 104966 / NBRC 100827 / IM2).